A 173-amino-acid chain; its full sequence is uncharacterized protein (173 aa).

The first 25 residues, 1-25, serve as a signal peptide directing secretion; the sequence is MPVVTAVGRRRGFAMPWVSTARSGA.

This is an uncharacterized protein from Mycobacterium bovis (strain ATCC BAA-935 / AF2122/97).